The sequence spans 307 residues: Small ribosomal subunit biogenesis GTPase RsgA (307 aa).

A disordered region spans residues 1 to 21 (MPSEHPFSDGISTPNPKETMN). Residues 10–21 (GISTPNPKETMN) are compositionally biased toward polar residues. The CP-type G domain maps to 85–242 (RQDAWKTKLI…LIDSPGLQEF (158 aa)). Residues 135-138 (NKAD) and 184-192 (GQSGMGKST) each bind GTP. Residues C266, C271, H273, and C279 each contribute to the Zn(2+) site.

Belongs to the TRAFAC class YlqF/YawG GTPase family. RsgA subfamily. Monomer. Associates with 30S ribosomal subunit, binds 16S rRNA. The cofactor is Zn(2+).

It localises to the cytoplasm. In terms of biological role, one of several proteins that assist in the late maturation steps of the functional core of the 30S ribosomal subunit. Helps release RbfA from mature subunits. May play a role in the assembly of ribosomal proteins into the subunit. Circularly permuted GTPase that catalyzes slow GTP hydrolysis, GTPase activity is stimulated by the 30S ribosomal subunit. This is Small ribosomal subunit biogenesis GTPase RsgA from Neisseria gonorrhoeae (strain NCCP11945).